We begin with the raw amino-acid sequence, 132 residues long: Small ribosomal subunit protein uS12 (132 aa).

A 3-methylthioaspartic acid modification is found at D89. The interval 102–132 (LDTSGVADRKQSRSKYGAKVPKAGAAPAKKK) is disordered. The span at 118-132 (GAKVPKAGAAPAKKK) shows a compositional bias: low complexity.

It belongs to the universal ribosomal protein uS12 family. In terms of assembly, part of the 30S ribosomal subunit. Contacts proteins S8 and S17. May interact with IF1 in the 30S initiation complex.

Its function is as follows. With S4 and S5 plays an important role in translational accuracy. Interacts with and stabilizes bases of the 16S rRNA that are involved in tRNA selection in the A site and with the mRNA backbone. Located at the interface of the 30S and 50S subunits, it traverses the body of the 30S subunit contacting proteins on the other side and probably holding the rRNA structure together. The combined cluster of proteins S8, S12 and S17 appears to hold together the shoulder and platform of the 30S subunit. This is Small ribosomal subunit protein uS12 from Chlorobaculum tepidum (strain ATCC 49652 / DSM 12025 / NBRC 103806 / TLS) (Chlorobium tepidum).